Consider the following 309-residue polypeptide: Tagatose-6-phosphate kinase (309 aa).

Belongs to the carbohydrate kinase PfkB family. LacC subfamily.

The catalysed reaction is D-tagatofuranose 6-phosphate + ATP = D-tagatofuranose 1,6-bisphosphate + ADP + H(+). Its pathway is carbohydrate metabolism; D-tagatose 6-phosphate degradation; D-glyceraldehyde 3-phosphate and glycerone phosphate from D-tagatose 6-phosphate: step 1/2. The protein is Tagatose-6-phosphate kinase of Streptococcus pneumoniae (strain Hungary19A-6).